The following is a 431-amino-acid chain: Adenylosuccinate synthetase (431 aa).

GTP is bound by residues 12 to 18 (GDEGKGK) and 40 to 42 (GHT). Catalysis depends on D13, which acts as the Proton acceptor. Residues D13 and G40 each coordinate Mg(2+). IMP-binding positions include 13 to 16 (DEGK), 38 to 41 (NAGH), T130, R144, Q225, T240, and R304. H41 functions as the Proton donor in the catalytic mechanism. 300–306 (STTGRPR) serves as a coordination point for substrate. Residues R306, 332 to 334 (KMD), and 414 to 416 (SIG) each bind GTP.

This sequence belongs to the adenylosuccinate synthetase family. Homodimer. Mg(2+) is required as a cofactor.

The protein localises to the cytoplasm. It carries out the reaction IMP + L-aspartate + GTP = N(6)-(1,2-dicarboxyethyl)-AMP + GDP + phosphate + 2 H(+). The protein operates within purine metabolism; AMP biosynthesis via de novo pathway; AMP from IMP: step 1/2. Its function is as follows. Plays an important role in the de novo pathway of purine nucleotide biosynthesis. Catalyzes the first committed step in the biosynthesis of AMP from IMP. The polypeptide is Adenylosuccinate synthetase (Syntrophotalea carbinolica (strain DSM 2380 / NBRC 103641 / GraBd1) (Pelobacter carbinolicus)).